Consider the following 58-residue polypeptide: Cecropin-A (58 aa).

Residues 1 to 23 (MNFSKIFIFVVLAVLLLCSQTEA) form the signal peptide. Residue Leu57 is modified to Leucine amide.

This sequence belongs to the cecropin family. In terms of tissue distribution, relatively abundant in head, thorax and to a lesser extent in abdominal carcass and anterior midgut.

The protein resides in the secreted. In terms of biological role, antibacterial activity against several Gram-positive and Gram-negative bacteria. Antifungal activity against A.fumigatus, B.cinerea, F.culmorum, F.oxysporum, N.crassa, C.albicans, C.neoformans and S.cerevisiae. This chain is Cecropin-A (CecA), found in Anopheles gambiae (African malaria mosquito).